The primary structure comprises 75 residues: Penaeidin-3n (75 aa).

An N-terminal signal peptide occupies residues 1–19 (MRLVVCLVFLASFALVCQG). Q20 is modified (pyrrolidone carboxylic acid). 2 disulfides stabilise this stretch: C44–C59 and C48–C66. S74 is subject to Serine amide.

This sequence belongs to the penaeidin family.

The protein resides in the cytoplasmic granule. Functionally, antibacterial and antifungal activity. Presents chitin-binding activity. The protein is Penaeidin-3n of Penaeus setiferus (Atlantic white shrimp).